A 317-amino-acid chain; its full sequence is Melanocyte-stimulating hormone receptor (317 aa).

Residues 1 to 37 lie on the Extracellular side of the membrane; the sequence is MPMQGAQRRLLGSLNSTPTATPNLGLAANHTGAPCLE. N29 carries an N-linked (GlcNAc...) asparagine glycan. Residues 38 to 63 form a helical membrane-spanning segment; the sequence is VSIPDGLFLSLGLVSLVENVLVVAAI. Residues 64–72 are Cytoplasmic-facing; sequence AKNRNLHSP. A helical membrane pass occupies residues 73–93; the sequence is MYCFICCLALSDLLVSGSNML. At 94-118 the chain is on the extracellular side; that stretch reads ETAVILLLEAGALATRASVVQQLQN. The helical transmembrane segment at 119–140 threads the bilayer; that stretch reads TIDVLTCSSMLCSLCFLGAIAV. Residues 141 to 163 lie on the Cytoplasmic side of the membrane; it reads DRYVSIFYALRYHSIVTLPRARR. Residues 164–183 form a helical membrane-spanning segment; that stretch reads AIAAIWVASVLSSTLFIAYC. Residues 184-191 lie on the Extracellular side of the membrane; that stretch reads DHAAVLLC. The chain crosses the membrane as a helical span at residues 192 to 211; sequence LVVFFLAMLVLMAVLYVHML. Residues 212–240 lie on the Cytoplasmic side of the membrane; sequence ARACQHAQGITRLHKRQLPAHQGFGLRGA. The chain crosses the membrane as a helical span at residues 241 to 266; that stretch reads ATLTILLGIFFLCWGPFFLHLMLVVL. Residues 267 to 279 are Extracellular-facing; the sequence is CPQHLTCSCIFKN. A helical transmembrane segment spans residues 280–300; it reads FKVFLTLIICNTIIDPLIYAF. Topologically, residues 301–317 are cytoplasmic; sequence RSQELCRTLKEVLLCSW. A lipid anchor (S-palmitoyl cysteine) is attached at C315.

Belongs to the G-protein coupled receptor 1 family. Interacts with MGRN1, but does not undergo MGRN1-mediated ubiquitination; this interaction competes with GNAS-binding and thus inhibits agonist-induced cAMP production. Interacts with OPN3; the interaction results in a decrease in MC1R-mediated cAMP signaling and ultimately a decrease in melanin production in melanocytes.

The protein resides in the cell membrane. Receptor for MSH (alpha, beta and gamma) and ACTH. The activity of this receptor is mediated by G proteins which activate adenylate cyclase. Mediates melanogenesis, the production of eumelanin (black/brown) and phaeomelanin (red/yellow), via regulation of cAMP signaling in melanocytes. This chain is Melanocyte-stimulating hormone receptor (MC1R), found in Alouatta palliata (Mantled howler monkey).